The following is a 555-amino-acid chain: Carboxylic ester hydrolase (555 aa).

The signal sequence occupies residues 1 to 19 (MELSVIALLLLGFVNFSWQ). Cys-86 and Cys-107 form a disulfide bridge. N-linked (GlcNAc...) asparagine glycosylation is found at Asn-120 and Asn-144. The active-site Acyl-ester intermediate is Ser-211. Cys-263 and Cys-274 are disulfide-bonded. Catalysis depends on Glu-336, which acts as the Charge relay system. N-linked (GlcNAc...) asparagine glycans are attached at residues Asn-369 and Asn-397. Residue His-459 is the Charge relay system of the active site. N-linked (GlcNAc...) asparagine glycans are attached at residues Asn-473 and Asn-533.

The protein belongs to the type-B carboxylesterase/lipase family. N-glycosylated. As to expression, expressed in several tissues, including epidermis (at protein level), fat body (at protein level), gut (at protein level), muscle (at protein level), and venom gland (at protein level).

It localises to the secreted. The enzyme catalyses a carboxylic ester + H2O = an alcohol + a carboxylate + H(+). Its function is as follows. Lipolytic agent that may be involved in distributing the venom via degradation of blood triglycerides. The recombinant protein degrades triglycerides and exhibits high lipolytic activity toward long-chain triglycerides (tested on tributyrin, trioctanoin and triolein). Does not affect mammalian cells. This Bombus ignitus (Bumblebee) protein is Carboxylic ester hydrolase (vCaE).